Reading from the N-terminus, the 523-residue chain is Cytochrome P450 monooxygenase bsc5 (523 aa).

The chain crosses the membrane as a helical span at residues 16–36 (MQLHWTVLGLLPVLFIAILGP). N-linked (GlcNAc...) asparagine glycosylation is found at N178, N281, and N403. C459 lines the heme pocket.

It belongs to the cytochrome P450 family. Requires heme as cofactor.

Its subcellular location is the membrane. The protein operates within mycotoxin biosynthesis. In terms of biological role, cytochrome P450 monooxygenase; part of the gene cluster that mediates the biosynthesis of the diterpene glucoside brassicicene C. In the first step of the brassicicene C biosynthesis, the bifunctional diterpene synthase bsc8 that possesses both prenyl transferase and terpene cyclase activity, converts isopentenyl diphosphate and dimethylallyl diphosphate into geranylgeranyl diphosphate (GGDP) that is further converted into fusicocca-2,10(14)-diene, the first precursor for brassicicene C. Fusicocca-2,10(14)-diene is then substrate of cytochrome P450 monooxygenase bsc1 for hydroxylation at the C-8 position. Oxidation at C-16 position to aldehyde is then catalyzed by the cytochrome P450 monooyxygenase bsc7, yielding fusicocca-2,10(14)-diene-8-beta,16-diol. Follows the isomerization of the double bond and reduction of aldehyde to alcohol catalyzed by the short-chain dehydrogenase/reductase bsc3 to yield the diol compound fusicocca-1,10(14)-diene-8 beta,16-diol. The next step is the oxidation at the C-3 position of fusicocca-2,10(14)-diene-8-beta,16-diol catalyzed by the alpha-ketoglutarate dependent dioxygenase bsc9, to produce a triol compound. Methylation of the hydroxy group at position 16 is performed by the methyltransferase bsc6. 16-O-methylation is followed by oxidation at the C-13 position to ketone and an alkyl shift of the methyl group leads to brassicicene C. Although the probable acetyltransferase bsc4 is included in the gene cluster, no acetylation reactions are necessary for brassicicene C biosynthesis. However, the fact that brassicicene E, which is a structurally related compound having an acetoxy group at position 12, was previously isolated from another strain of A.brassicicola suggests that the ATCC 96836 strain might also produce a small amount of brassicicene E. In Alternaria brassicicola (Dark leaf spot agent), this protein is Cytochrome P450 monooxygenase bsc5.